The following is a 217-amino-acid chain: MDQFNQQQQSQMNKGIPGKPHKNHGGHEMFDMHEVLSGTLTVLDQFMMLRQFCKDQELLNILDRQHQFITSQYNITAECFKTGSEPSQKTATYMMKEDNQTVYGMQPSQPKKPVQSMNDIDDSIISRQMLCAIKAQASMLTMASLEMTNPAVRRVLSAQIQEYVEMAFEIFLYQNKHGYYQVPQLDAQDMEQLRNSFAPAQGQMPPTQGGMGQQGLH.

Positions 1–11 (MDQFNQQQQSQ) are enriched in low complexity. A disordered region spans residues 1 to 28 (MDQFNQQQQSQMNKGIPGKPHKNHGGHE).

The protein belongs to the CotF family.

It localises to the spore coat. The chain is Spore coat protein F-like protein YhcQ (yhcQ) from Bacillus subtilis (strain 168).